The sequence spans 304 residues: UTP--glucose-1-phosphate uridylyltransferase 1 (304 aa).

Belongs to the UDPGP type 2 family.

It carries out the reaction alpha-D-glucose 1-phosphate + UTP + H(+) = UDP-alpha-D-glucose + diphosphate. The protein operates within carbohydrate metabolism; nucleotide-sugar metabolism. This chain is UTP--glucose-1-phosphate uridylyltransferase 1 (hasC1), found in Streptococcus pyogenes serotype M3 (strain ATCC BAA-595 / MGAS315).